The following is a 364-amino-acid chain: Coproporphyrin III ferrochelatase (364 aa).

R29 and Y118 together coordinate Fe-coproporphyrin III. Fe(2+) contacts are provided by H169 and E250.

This sequence belongs to the ferrochelatase family.

Its subcellular location is the cytoplasm. It catalyses the reaction Fe-coproporphyrin III + 2 H(+) = coproporphyrin III + Fe(2+). It participates in porphyrin-containing compound metabolism; protoheme biosynthesis. Functionally, involved in coproporphyrin-dependent heme b biosynthesis. Catalyzes the insertion of ferrous iron into coproporphyrin III to form Fe-coproporphyrin III. The sequence is that of Coproporphyrin III ferrochelatase from Streptococcus pneumoniae (strain Hungary19A-6).